The chain runs to 175 residues: MTAILVTGYKSFELGLFSDKDPRIKVIKAAIQKDMVKMIEEGVDWFILTGNLGFEYWALEVLKDLKKAYPISVATIFAFENHGENWNESNLEKLAAFKTVDFVKYSYPQYENPSQFKSYHEFLMANTEGAYLFYDSENETNLKYLVMKMKELPQYRIHYLTFDRLNEIYEEGNDF.

This sequence belongs to the UPF0398 family.

This Streptococcus uberis (strain ATCC BAA-854 / 0140J) protein is UPF0398 protein SUB1405.